The following is a 235-amino-acid chain: MVHIISKKSVSFIGQSLAAKIDEQLFSKYGFKVEQLMELAGLASAQAIAAHYPKSKVAVLCGPGNNGGDGFVCARHLQQFGFNPSIVYPKESKNELMKSLVIQCETSSIPVQPNLPTDLQSFPLIVDALFGFSFKPPAREPFTEILKAVRASGIHVFSIDIPSGWDVENGAPSEASEDIIHPHAVISLTLPKMCMKSWTGPHFLGGRFVPRGLVEEHGLQMPVYPGFEQIVKVED.

The 204-residue stretch at 18-221 (AAKIDEQLFS…GLVEEHGLQM (204 aa)) folds into the YjeF N-terminal domain. 65–69 (NNGGD) is a binding site for (6S)-NADPHX. 2 residues coordinate K(+): asparagine 66 and aspartate 127. (6S)-NADPHX-binding positions include 131–137 (GFSFKPP) and aspartate 160. Serine 163 is a K(+) binding site.

Belongs to the NnrE/AIBP family. K(+) is required as a cofactor.

The enzyme catalyses (6R)-NADHX = (6S)-NADHX. The catalysed reaction is (6R)-NADPHX = (6S)-NADPHX. In terms of biological role, catalyzes the epimerization of the S- and R-forms of NAD(P)HX, a damaged form of NAD(P)H that is a result of enzymatic or heat-dependent hydration. This is a prerequisite for the S-specific NAD(P)H-hydrate dehydratase to allow the repair of both epimers of NAD(P)HX. This Caenorhabditis briggsae protein is NAD(P)H-hydrate epimerase.